We begin with the raw amino-acid sequence, 237 residues long: Pheromone-regulated membrane protein 8 (237 aa).

Over 1–47 (MQTPSENTNAKSDSLDEPGAYLIEENVALPKDIFHSYLSYWIYEAAH) the chain is Cytoplasmic. Residues 48 to 68 (CTPVMLLSLVIGVLISIIILF) traverse the membrane as a helical segment. The Extracellular segment spans residues 69–74 (HDNENC). The helical transmembrane segment at 75–95 (VGVSVGFLLIFSGILVIVLIL) threads the bilayer. The Cytoplasmic segment spans residues 96–237 (RFGPQISDED…QEYPGVDEFF (142 aa)). The disordered stretch occupies residues 174-201 (SSASNVKDAQSNDETAGTPNEAAESSSF). The tract at residues 236 to 237 (FF) is COPII binding.

It belongs to the DUP/COS family. Interacts with PRM9. Binds to SEC23/24 of COPII coated vesicles.

It localises to the membrane. The protein localises to the endoplasmic reticulum. May be involved in endoplasmic reticulum exit trafficking of proteins. In Saccharomyces cerevisiae (strain ATCC 204508 / S288c) (Baker's yeast), this protein is Pheromone-regulated membrane protein 8 (PRM8).